The following is a 90-amino-acid chain: U7-theraphotoxin-Hhn1f (90 aa).

A signal peptide spans 1–19; the sequence is MKTAIFTVVLALAVFAVLS. Residues 20–50 constitute a propeptide that is removed on maturation; sequence FGWEANEKALSEEFTELIHEKEAASETEARG. Disulfide bonds link C51/C65, C58/C70, and C64/C81.

The protein belongs to the neurotoxin 10 (Hwtx-1) family. 13 (Hntx-13) subfamily. In terms of tissue distribution, expressed by the venom gland.

It is found in the secreted. In terms of biological role, ion channel inhibitor. The polypeptide is U7-theraphotoxin-Hhn1f (Cyriopagopus hainanus (Chinese bird spider)).